We begin with the raw amino-acid sequence, 760 residues long: Protein P1 (760 aa).

An N-terminal signal peptide occupies residues 1 to 33 (MASFLKPVNSQGLWLSLLLAITYLFLLPSAGQS). 4 consecutive transmembrane segments (helical) span residues 172-192 (LIEF…VYVA), 194-214 (AVPG…WAWP), 218-235 (ASSL…IGFL), and 240-260 (IGLI…WSLL). The Peptidase S39 domain maps to 318-515 (IPGVQIKKLR…SSSPKFTGCE (198 aa)). Residues His366, Asp396, and Ser465 each act as for protease activity in the active site. 2 disordered regions span residues 572-672 (GLWA…LSQV) and 684-760 (LTVQ…PRRN). Basic and acidic residues predominate over residues 621-643 (RAEKVRHVRRSEMTPEQKRADNL).

It belongs to the peptidase S39B family. Post-translationally, specific enzymatic cleavages in vivo yield mature proteins. The protease probably cleaves itself and releases the VPg protein.

The protein localises to the membrane. Precursor from which the VPg molecule is probably released at the onset of the RNA synthesis. Essential for virus replication. This is Protein P1 from Pea enation mosaic virus-1 (strain WSG) (PEMV-1).